The following is a 689-amino-acid chain: Histone-lysine N-methyltransferase MEDEA (689 aa).

Disordered stretches follow at residues 1–20 (MEKE…LNQI), 51–73 (HQSF…KSLL), and 169–188 (ELSS…EIKK). The segment at 1–109 (MEKENHEDDG…DEDQDYALEE (109 aa)) is interaction with FIE. Residues 171–184 (SSEEDEEDEEEDEE) are compositionally biased toward acidic residues. In terms of domain architecture, SANT spans 339 to 389 (NNTMWTPVEKDLYLKGIEIFGRNSCDVALNILRGLKTCLEIYNYMREQDQC). The 105-residue stretch at 428–532 (RYPPALKKTT…TLGETPVQIQ (105 aa)) folds into the CXC domain. Positions 544–659 (KKILIGKSDV…EGEELFFDYC (116 aa)) constitute an SET domain. The segment at 666 to 689 (DWSRGREPRKTGASKRSKEARPAR) is disordered.

Belongs to the class V-like SAM-binding methyltransferase superfamily. Histone-lysine methyltransferase family. EZ subfamily. In terms of assembly, interacts directly with FIE via its N-terminal domain. These two proteins are probably indirectly associated with FIS2. In plants, PcG complexes are probably composed of a member of the EZ family (CLF or MEA), FIE, and a member of the VEFS family (FIS2, VRN2 or EMF2). Interacts with TAF13. Expressed in unpollinated siliques that contain maturing gametophytes. Not expressed at early stages of floral development during early megagametogenesis.

It is found in the nucleus. It catalyses the reaction L-lysyl(27)-[histone H3] + 3 S-adenosyl-L-methionine = N(6),N(6),N(6)-trimethyl-L-lysyl(27)-[histone H3] + 3 S-adenosyl-L-homocysteine + 3 H(+). Its function is as follows. Polycomb group (PcG) protein. Catalytic subunit of some PcG multiprotein complex, which methylates 'Lys-27' of histone H3, leading to transcriptional repression of the affected target genes. Required to prevent the proliferation of the central cell of the female gametophyte by repressing target genes before fertilization. After fertilization, it probably also regulates the embryo and endosperm proliferation and anteroposterior organization during seed development. PcG proteins act by forming multiprotein complexes, which are required to maintain the transcriptionally repressive state of homeotic genes throughout development. PcG proteins are not required to initiate repression, but to maintain it during later stages of development. Interacts with the promoter and repress the transcription of genes such as PHE1 and PHE2, that are paternally active and maternally silenced genes. The polypeptide is Histone-lysine N-methyltransferase MEDEA (MEA) (Arabidopsis thaliana (Mouse-ear cress)).